The sequence spans 665 residues: non-specific serine/threonine protein kinase (665 aa).

The region spanning 145–597 (FDVHCRIGSG…AEEALKHPFF (453 aa)) is the Protein kinase domain. Residues 151–159 (IGSGTFSTV) and Lys-181 contribute to the ATP site. Asp-268 acts as the Proton acceptor in catalysis.

Belongs to the protein kinase superfamily. Ser/Thr protein kinase family. Interacts with chif (via N-terminus).

It catalyses the reaction L-seryl-[protein] + ATP = O-phospho-L-seryl-[protein] + ADP + H(+). The catalysed reaction is L-threonyl-[protein] + ATP = O-phospho-L-threonyl-[protein] + ADP + H(+). Probable serine/threonine protein kinase that forms a complex with the N-terminal peptide of the chiffon protein and may be involved in regulating meiotic processes in the male testis. This is non-specific serine/threonine protein kinase from Drosophila melanogaster (Fruit fly).